The primary structure comprises 193 residues: Leucyl/phenylalanyl-tRNA--protein transferase (193 aa).

The protein belongs to the L/F-transferase family.

The protein resides in the cytoplasm. The catalysed reaction is N-terminal L-lysyl-[protein] + L-leucyl-tRNA(Leu) = N-terminal L-leucyl-L-lysyl-[protein] + tRNA(Leu) + H(+). The enzyme catalyses N-terminal L-arginyl-[protein] + L-leucyl-tRNA(Leu) = N-terminal L-leucyl-L-arginyl-[protein] + tRNA(Leu) + H(+). It catalyses the reaction L-phenylalanyl-tRNA(Phe) + an N-terminal L-alpha-aminoacyl-[protein] = an N-terminal L-phenylalanyl-L-alpha-aminoacyl-[protein] + tRNA(Phe). Functionally, functions in the N-end rule pathway of protein degradation where it conjugates Leu, Phe and, less efficiently, Met from aminoacyl-tRNAs to the N-termini of proteins containing an N-terminal arginine or lysine. The polypeptide is Leucyl/phenylalanyl-tRNA--protein transferase (Gloeobacter violaceus (strain ATCC 29082 / PCC 7421)).